A 266-amino-acid polypeptide reads, in one-letter code: MDVILMLNKRELAYWCVVNDRKLYLLDNAIPLLEKSELTFNTDSARVIGEYLDHPVYWLEANNCLHSDDFYTQRELLGIDQALFDLAGRATQLSHMLHTQSFCSVCGGAAVLADDQFAMVCQQCSNAQYPRVSPCIIVAVRKEDQILLAQHPRHKTGIYTVIAGFVEAGETLEQCVAREVEEETGIQVKNIRYFSSQPWAFPSNIMMAFLADYESGEINPDYEELSDAIWAKAAELPAIAPKGTIARVLIDETLALIKATKHVQNL.

Residue Arg-74 coordinates substrate. Residues Cys-103, Cys-106, Cys-121, and Cys-124 each coordinate Zn(2+). Position 129 (Tyr-129) interacts with substrate. In terms of domain architecture, Nudix hydrolase spans 130 to 253 (PRVSPCIIVA…TIARVLIDET (124 aa)). 3 residues coordinate a divalent metal cation: Ala-163, Glu-179, and Glu-183. Positions 164-185 (GFVEAGETLEQCVAREVEEETG) match the Nudix box motif. 197–204 (QPWAFPSN) is a substrate binding site. Glu-224 contributes to the a divalent metal cation binding site. Residue Ala-246 participates in substrate binding.

The protein belongs to the Nudix hydrolase family. NudC subfamily. As to quaternary structure, homodimer. Requires Mg(2+) as cofactor. It depends on Mn(2+) as a cofactor. Zn(2+) is required as a cofactor.

The catalysed reaction is a 5'-end NAD(+)-phospho-ribonucleoside in mRNA + H2O = a 5'-end phospho-adenosine-phospho-ribonucleoside in mRNA + beta-nicotinamide D-ribonucleotide + 2 H(+). The enzyme catalyses NAD(+) + H2O = beta-nicotinamide D-ribonucleotide + AMP + 2 H(+). It catalyses the reaction NADH + H2O = reduced beta-nicotinamide D-ribonucleotide + AMP + 2 H(+). Functionally, mRNA decapping enzyme that specifically removes the nicotinamide adenine dinucleotide (NAD) cap from a subset of mRNAs by hydrolyzing the diphosphate linkage to produce nicotinamide mononucleotide (NMN) and 5' monophosphate mRNA. The NAD-cap is present at the 5'-end of some mRNAs and stabilizes RNA against 5'-processing. Has preference for mRNAs with a 5'-end purine. Catalyzes the hydrolysis of a broad range of dinucleotide pyrophosphates. This is NAD-capped RNA hydrolase NudC from Photobacterium profundum (strain SS9).